A 258-amino-acid chain; its full sequence is Phosphate import ATP-binding protein PstB (258 aa).

The 243-residue stretch at Leu5 to Lys247 folds into the ABC transporter domain. Gly37–Ser44 provides a ligand contact to ATP.

This sequence belongs to the ABC transporter superfamily. Phosphate importer (TC 3.A.1.7) family. As to quaternary structure, the complex is composed of two ATP-binding proteins (PstB), two transmembrane proteins (PstC and PstA) and a solute-binding protein (PstS).

It localises to the cell membrane. The enzyme catalyses phosphate(out) + ATP + H2O = ADP + 2 phosphate(in) + H(+). Its function is as follows. Part of the ABC transporter complex PstSACB involved in phosphate import. Responsible for energy coupling to the transport system. This is Phosphate import ATP-binding protein PstB from Mycolicibacterium smegmatis (Mycobacterium smegmatis).